The sequence spans 457 residues: Methylenetetrahydrofolate--tRNA-(uracil-5-)-methyltransferase TrmFO (457 aa).

8–13 is an FAD binding site; it reads GGGLAG.

Belongs to the MnmG family. TrmFO subfamily. Requires FAD as cofactor.

The protein localises to the cytoplasm. The catalysed reaction is uridine(54) in tRNA + (6R)-5,10-methylene-5,6,7,8-tetrahydrofolate + NADH + H(+) = 5-methyluridine(54) in tRNA + (6S)-5,6,7,8-tetrahydrofolate + NAD(+). The enzyme catalyses uridine(54) in tRNA + (6R)-5,10-methylene-5,6,7,8-tetrahydrofolate + NADPH + H(+) = 5-methyluridine(54) in tRNA + (6S)-5,6,7,8-tetrahydrofolate + NADP(+). Catalyzes the folate-dependent formation of 5-methyl-uridine at position 54 (M-5-U54) in all tRNAs. This Thermosynechococcus vestitus (strain NIES-2133 / IAM M-273 / BP-1) protein is Methylenetetrahydrofolate--tRNA-(uracil-5-)-methyltransferase TrmFO.